A 475-amino-acid polypeptide reads, in one-letter code: Protein transport protein Sec61 subunit alpha (475 aa).

The next 10 membrane-spanning stretches (helical) occupy residues 33-53, 76-96, 118-138, 145-165, 173-193, 241-261, 289-309, 354-374, 420-440, and 441-461; these read LWTA…LFGI, LMEL…LLAG, LFGM…GMYG, AGIC…VLLL, YGLG…TIVW, NLMN…FQGF, IPII…QMLA, FLDP…CAFF, AAFG…IGAI, and GSGT…EIFV.

The protein belongs to the SecY/SEC61-alpha family. As to quaternary structure, the SEC61 channel-forming translocon complex consists of channel-forming core components SEC61A1, SEC61B and SEC61G and different auxiliary components such as SEC62 and SEC63. The SEC61 channel associates with the multi-pass translocon (MPT) complex. In terms of tissue distribution, expressed predominantly in epidermal cells of the embryo.

Its subcellular location is the endoplasmic reticulum membrane. Its function is as follows. Component of SEC61 channel-forming translocon complex that mediates transport of signal peptide-containing precursor polypeptides across the endoplasmic reticulum (ER). Forms a ribosome receptor and a gated pore in the ER membrane, both functions required for cotranslational translocation of nascent polypeptides. May cooperate with auxiliary protein SEC62, SEC63 and HSPA5/BiP to enable post-translational transport of small presecretory proteins. The SEC61 channel is also involved in ER membrane insertion of transmembrane proteins: it mediates membrane insertion of the first few transmembrane segments of proteins, while insertion of subsequent transmembrane regions of multi-pass membrane proteins is mediated by the multi-pass translocon (MPT) complex. In Halocynthia roretzi (Sea squirt), this protein is Protein transport protein Sec61 subunit alpha.